Here is a 153-residue protein sequence, read N- to C-terminus: MIALIQRVAQARVTVEGRTTGEIGAGLLALVCAERGDTEAQAERLLAKMLSYRVFSDAAGKMNLPVQNMDGNGNAGGLLVVSQFTLAADTNSGTRPSFTPAASPEDGRRLYEHFVAQARAAHPQVQTGEFGAMMQVSLVNDGPVTFWLRVPPA.

A Gly-cisPro motif, important for rejection of L-amino acids motif is present at residues 142 to 143 (GP).

This sequence belongs to the DTD family. In terms of assembly, homodimer.

It localises to the cytoplasm. The catalysed reaction is glycyl-tRNA(Ala) + H2O = tRNA(Ala) + glycine + H(+). It catalyses the reaction a D-aminoacyl-tRNA + H2O = a tRNA + a D-alpha-amino acid + H(+). Its function is as follows. An aminoacyl-tRNA editing enzyme that deacylates mischarged D-aminoacyl-tRNAs. Also deacylates mischarged glycyl-tRNA(Ala), protecting cells against glycine mischarging by AlaRS. Acts via tRNA-based rather than protein-based catalysis; rejects L-amino acids rather than detecting D-amino acids in the active site. By recycling D-aminoacyl-tRNA to D-amino acids and free tRNA molecules, this enzyme counteracts the toxicity associated with the formation of D-aminoacyl-tRNA entities in vivo and helps enforce protein L-homochirality. This is D-aminoacyl-tRNA deacylase from Cupriavidus necator (strain ATCC 17699 / DSM 428 / KCTC 22496 / NCIMB 10442 / H16 / Stanier 337) (Ralstonia eutropha).